The primary structure comprises 276 residues: tRNA dimethylallyltransferase (276 aa).

The segment at 9-12 (DSLS) is interaction with substrate tRNA.

This sequence belongs to the IPP transferase family. Monomer. Requires Mg(2+) as cofactor.

The catalysed reaction is adenosine(37) in tRNA + dimethylallyl diphosphate = N(6)-dimethylallyladenosine(37) in tRNA + diphosphate. In terms of biological role, catalyzes the transfer of a dimethylallyl group onto the adenine at position 37 in tRNAs that read codons beginning with uridine, leading to the formation of N6-(dimethylallyl)adenosine (i(6)A). The protein is tRNA dimethylallyltransferase (miaA) of Helicobacter pylori (strain Shi470).